The chain runs to 135 residues: U-scoloptoxin(22)-Er1a (135 aa).

A signal peptide spans 1–24; that stretch reads MAVILKHLAIILLVFVIEIKMGQG. The segment at 61–135 is disordered; sequence PQITFSTDWG…RSPRYLPTII (75 aa). Over residues 75 to 127 the composition is skewed to basic and acidic residues; it reads SVNEDREAAERERSPQMKRSEHEEQLMAKDEMKRFQEERNPSSDDKIAIDKRS.

It belongs to the scoloptoxin-22 family. As to expression, expressed by the venom gland.

Its subcellular location is the secreted. The protein is U-scoloptoxin(22)-Er1a of Ethmostigmus rubripes (Giant centipede).